Consider the following 320-residue polypeptide: Acetyl-coenzyme A carboxylase carboxyl transferase subunit alpha (320 aa).

Residues 33 to 294 form the CoA carboxyltransferase C-terminal domain; the sequence is AFDGEIESLR…GDAVEEELKA (262 aa).

The protein belongs to the AccA family. In terms of assembly, acetyl-CoA carboxylase is a heterohexamer composed of biotin carboxyl carrier protein (AccB), biotin carboxylase (AccC) and two subunits each of ACCase subunit alpha (AccA) and ACCase subunit beta (AccD).

Its subcellular location is the cytoplasm. The enzyme catalyses N(6)-carboxybiotinyl-L-lysyl-[protein] + acetyl-CoA = N(6)-biotinyl-L-lysyl-[protein] + malonyl-CoA. Its pathway is lipid metabolism; malonyl-CoA biosynthesis; malonyl-CoA from acetyl-CoA: step 1/1. Its function is as follows. Component of the acetyl coenzyme A carboxylase (ACC) complex. First, biotin carboxylase catalyzes the carboxylation of biotin on its carrier protein (BCCP) and then the CO(2) group is transferred by the carboxyltransferase to acetyl-CoA to form malonyl-CoA. The sequence is that of Acetyl-coenzyme A carboxylase carboxyl transferase subunit alpha from Phenylobacterium zucineum (strain HLK1).